We begin with the raw amino-acid sequence, 343 residues long: Polyprenal reductase 2 (343 aa).

A run of 6 helical transmembrane segments spans residues 12 to 32 (GAWI…SIPT), 66 to 86 (FAHF…ATWM), 164 to 184 (MHIL…LSLC), 223 to 243 (PLMK…WGWI), 266 to 286 (IIPY…AEIV), and 291 to 311 (LLIA…FVAA).

The protein belongs to the steroid 5-alpha reductase family. Polyprenal reductase subfamily. Expressed in roots, leaves, stems and flowers.

Its subcellular location is the endoplasmic reticulum membrane. The enzyme catalyses a di-trans,poly-cis-dolichal + NADP(+) = a di-trans,poly-cis-polyprenal + NADPH + H(+). The protein operates within protein modification; protein glycosylation. Its function is as follows. Plays a key role in early steps of protein N-linked glycosylation by being involved in the conversion of polyprenol into dolichol. Acts as a polyprenal reductase that mediates the reduction of polyprenal into dolichal in a NADP-dependent mechanism. Dolichols are required for the synthesis of dolichol-linked monosaccharides and the oligosaccharide precursor used for N-glycosylation. Involved in the regulation of plant growth and reproductive processes. The protein is Polyprenal reductase 2 of Arabidopsis thaliana (Mouse-ear cress).